The primary structure comprises 694 residues: Elongation factor G (694 aa).

Positions 10 to 285 (EKTRNIGIMA…AVLDYLPSPV (276 aa)) constitute a tr-type G domain. GTP is bound by residues 19–26 (AHIDAGKT), 83–87 (DTPGH), and 137–140 (NKMD).

The protein belongs to the TRAFAC class translation factor GTPase superfamily. Classic translation factor GTPase family. EF-G/EF-2 subfamily.

It localises to the cytoplasm. In terms of biological role, catalyzes the GTP-dependent ribosomal translocation step during translation elongation. During this step, the ribosome changes from the pre-translocational (PRE) to the post-translocational (POST) state as the newly formed A-site-bound peptidyl-tRNA and P-site-bound deacylated tRNA move to the P and E sites, respectively. Catalyzes the coordinated movement of the two tRNA molecules, the mRNA and conformational changes in the ribosome. This chain is Elongation factor G, found in Limosilactobacillus fermentum (strain NBRC 3956 / LMG 18251) (Lactobacillus fermentum).